The following is a 457-amino-acid chain: UDP-N-acetylmuramate--L-alanine ligase (457 aa).

117–123 lines the ATP pocket; the sequence is GTHGKTT.

Belongs to the MurCDEF family.

It localises to the cytoplasm. The catalysed reaction is UDP-N-acetyl-alpha-D-muramate + L-alanine + ATP = UDP-N-acetyl-alpha-D-muramoyl-L-alanine + ADP + phosphate + H(+). It participates in cell wall biogenesis; peptidoglycan biosynthesis. Functionally, cell wall formation. This Clostridium kluyveri (strain NBRC 12016) protein is UDP-N-acetylmuramate--L-alanine ligase.